We begin with the raw amino-acid sequence, 106 residues long: Iron-sulfur cluster assembly protein CyaY (106 aa).

The protein belongs to the frataxin family.

Its function is as follows. Involved in iron-sulfur (Fe-S) cluster assembly. May act as a regulator of Fe-S biogenesis. In Yersinia pseudotuberculosis serotype O:3 (strain YPIII), this protein is Iron-sulfur cluster assembly protein CyaY.